Here is a 460-residue protein sequence, read N- to C-terminus: Equilibrative nucleoside transporter 1 (460 aa).

The Cytoplasmic segment spans residues 1–12; that stretch reads MTTSHQPQDRYK. The chain crosses the membrane as a helical span at residues 13–29; that stretch reads AVWLIFFVLGLGTLLPW. Topologically, residues 30–82 are extracellular; the sequence is NFFMTATKYFTNRLDVSQNVSSDTDQSCESTKALADPTVALPARSSLSAIFNN. Asparagine 48 carries N-linked (GlcNAc...) asparagine glycosylation. A helical membrane pass occupies residues 83–107; the sequence is VMTLCAMLPLLVFTCLNSFLHQRIS. At 108–111 the chain is on the cytoplasmic side; that stretch reads QSVR. A helical transmembrane segment spans residues 112–130; it reads ILGSLLAILLVFLVTAALV. The Extracellular portion of the chain corresponds to 131–138; it reads KVEMDALI. The helical transmembrane segment at 139–157 threads the bilayer; it reads FFVITMIKIVLINSFGAIL. Topologically, residues 158-174 are cytoplasmic; it reads QASLFGLAGVLPANYTA. A helical membrane pass occupies residues 175–199; it reads PIMSGQGLAGFFTSVAMICAIASGS. Residues 200–206 are Extracellular-facing; sequence ELSESAF. The helical transmembrane segment at 207–227 threads the bilayer; the sequence is GYFITACAVVILAILCYLALP. Residues 228–291 are Cytoplasmic-facing; it reads RTEFYRHYLQ…IKAILKSICV (64 aa). The residue at position 254 (serine 254) is a Phosphoserine. Positions 255–266 are enriched in basic and acidic residues; sequence KGEEPKGRREES. Residues 255–277 are disordered; that stretch reads KGEEPKGRREESGVPGPNSPPTN. At serine 273 the chain carries Phosphoserine. A helical membrane pass occupies residues 292 to 311; that stretch reads PALSVCFIFTVTIGLFPAVT. The Extracellular segment spans residues 312–323; it reads AEVESSIAGTSP. A helical transmembrane segment spans residues 324–342; sequence WKSYFIPVACFLNFNVFDW. Topologically, residues 343 to 359 are cytoplasmic; the sequence is LGRSLTAVCMWPGQDSR. Residues 360–378 traverse the membrane as a helical segment; it reads WLPVLVASRIVFIPLLMLC. Over 379–397 the chain is Extracellular; that stretch reads NVKARHCGAQRHHFVFKHD. A helical membrane pass occupies residues 398-417; that stretch reads AWFIAFMAAFAFSNGYLASL. Over 418 to 435 the chain is Cytoplasmic; that stretch reads CMCFGPKKVKPAEAETAG. The chain crosses the membrane as a helical span at residues 436–456; the sequence is NIMSFFLCLGLALGAVLSFLL. Residues 457 to 460 lie on the Extracellular side of the membrane; it reads RALV.

The protein belongs to the SLC29A/ENT transporter (TC 2.A.57) family. Identified in a complex with STOM. In terms of processing, glycosylated. Highly expressed in heart, spleen, lung, liver and testis. Lower level of expression in brain and kidney. Expressed in adipose tissues, brown adipocytes expressing significantly higher amounts than white adipocytes. Expressed in seminiferous tubules.

It is found in the basolateral cell membrane. Its subcellular location is the apical cell membrane. The protein resides in the cell membrane. The enzyme catalyses adenosine(in) = adenosine(out). It catalyses the reaction guanosine(in) = guanosine(out). It carries out the reaction inosine(in) = inosine(out). The catalysed reaction is uridine(out) = uridine(in). The enzyme catalyses thymidine(in) = thymidine(out). It catalyses the reaction cytidine(in) = cytidine(out). It carries out the reaction adenine(out) = adenine(in). The catalysed reaction is guanine(out) = guanine(in). The enzyme catalyses thymine(out) = thymine(in). It catalyses the reaction uracil(in) = uracil(out). It carries out the reaction hypoxanthine(out) = hypoxanthine(in). Transporter activity is sensitive to low concentrations of the inhibitor nitrobenzylmercaptopurine riboside (NBMPR). Uniporter involved in the facilitative transport of nucleosides and nucleobases, and contributes to maintaining their cellular homeostasis. Functions as a Na(+)-independent transporter. Involved in the transport of nucleosides such as adenosine, guanosine, inosine, uridine, thymidine and cytidine. Also transports purine (hypoxanthine, adenine, guanine) and pyrimidine nucleobases (thymine, uracil). Mediates basolateral nucleoside uptake into Sertoli cells, thereby regulating the transport of nucleosides in testis across the blood-testis-barrier. Regulates inosine levels in brown adipocytes tissues (BAT) and extracellular inosine levels, which controls BAT-dependent energy expenditure. In Mus musculus (Mouse), this protein is Equilibrative nucleoside transporter 1.